Consider the following 57-residue polypeptide: uncharacterized protein (57 aa).

The helical transmembrane segment at 10–27 (FGLLWLIIGSEAFHLNAL) threads the bilayer. The stretch at 28-55 (KQDHLERMKQYDAKIRLAKHEFDDTSNE) forms a coiled coil.

Its subcellular location is the membrane. This is an uncharacterized protein from Schizosaccharomyces pombe (strain 972 / ATCC 24843) (Fission yeast).